Consider the following 806-residue polypeptide: Glycerol-3-phosphate acyltransferase (806 aa).

The HXXXXD motif signature appears at 305–310; sequence CHRSHM.

The protein belongs to the GPAT/DAPAT family.

Its subcellular location is the cell inner membrane. It carries out the reaction sn-glycerol 3-phosphate + an acyl-CoA = a 1-acyl-sn-glycero-3-phosphate + CoA. The protein operates within phospholipid metabolism; CDP-diacylglycerol biosynthesis; CDP-diacylglycerol from sn-glycerol 3-phosphate: step 1/3. The polypeptide is Glycerol-3-phosphate acyltransferase (Salmonella paratyphi B (strain ATCC BAA-1250 / SPB7)).